The primary structure comprises 811 residues: Protein MEI2-like 5 (811 aa).

RRM domains are found at residues 193–266 and 278–351; these read RTLF…YSIP and GTLV…PSRP. The segment at 371 to 397 is disordered; that stretch reads TKHNSFQIGSPSANSPPSLWSQLGSPT. The span at 374 to 397 shows a compositional bias: polar residues; that stretch reads NSFQIGSPSANSPPSLWSQLGSPT.

In terms of biological role, probable RNA-binding protein that may play a role in growth regulation. This is Protein MEI2-like 5 (ML5) from Oryza sativa subsp. japonica (Rice).